Reading from the N-terminus, the 285-residue chain is MNENEKKLLSDIECLPNVDCKCDFGDIVRAFADYKINDELKFKVRQIALNLRPWRKGPFEILETFIDSEWQSFMKFNLLKPFMDLQGKKVADIGCNNGYYLFRMSNLGAKKLIGFDPGVRTFLQFRFLEHFLKSGVIYELLGVENLPDYGEKFDSIFCLGVLYHRSDPVRALKELKSSLNSGGEVFLDTMFIDGDDEICLFPRLSYAKISNIYFLPTIRTLQNWCERAKFKDFEILAVKATDENEQRKTDWIYGQSLGDFLDPFDKTRTIEGYPAPKRVYVRVKI.

Residues lysine 56, tryptophan 70, lysine 75, glycine 94, 143–144 (VE), tyrosine 163, and arginine 278 contribute to the carboxy-S-adenosyl-L-methionine site.

The protein belongs to the class I-like SAM-binding methyltransferase superfamily. CmoB family. Homotetramer.

It carries out the reaction carboxy-S-adenosyl-L-methionine + 5-hydroxyuridine(34) in tRNA = 5-carboxymethoxyuridine(34) in tRNA + S-adenosyl-L-homocysteine + H(+). Functionally, catalyzes carboxymethyl transfer from carboxy-S-adenosyl-L-methionine (Cx-SAM) to 5-hydroxyuridine (ho5U) to form 5-carboxymethoxyuridine (cmo5U) at position 34 in tRNAs. The sequence is that of tRNA U34 carboxymethyltransferase from Campylobacter hominis (strain ATCC BAA-381 / DSM 21671 / CCUG 45161 / LMG 19568 / NCTC 13146 / CH001A).